The following is a 256-amino-acid chain: Trans-aconitate 2-methyltransferase (256 aa).

Belongs to the methyltransferase superfamily. Tam family.

Its subcellular location is the cytoplasm. The enzyme catalyses trans-aconitate + S-adenosyl-L-methionine = (E)-3-(methoxycarbonyl)pent-2-enedioate + S-adenosyl-L-homocysteine. Functionally, catalyzes the S-adenosylmethionine monomethyl esterification of trans-aconitate. The polypeptide is Trans-aconitate 2-methyltransferase (Rhodopseudomonas palustris (strain BisB5)).